The following is a 190-amino-acid chain: dTTP/UTP pyrophosphatase (190 aa).

Aspartate 71 serves as the catalytic Proton acceptor.

This sequence belongs to the Maf family. YhdE subfamily. A divalent metal cation serves as cofactor.

It localises to the cytoplasm. The catalysed reaction is dTTP + H2O = dTMP + diphosphate + H(+). It carries out the reaction UTP + H2O = UMP + diphosphate + H(+). Nucleoside triphosphate pyrophosphatase that hydrolyzes dTTP and UTP. May have a dual role in cell division arrest and in preventing the incorporation of modified nucleotides into cellular nucleic acids. This chain is dTTP/UTP pyrophosphatase, found in Xanthomonas oryzae pv. oryzae (strain MAFF 311018).